The following is a 730-amino-acid chain: Ribosomal RNA large subunit methyltransferase K/L (730 aa).

The 112-residue stretch at 46-157 (TAYRLCLWSR…RGEAILSLDL (112 aa)) folds into the THUMP domain.

It belongs to the methyltransferase superfamily. RlmKL family.

It is found in the cytoplasm. It catalyses the reaction guanosine(2445) in 23S rRNA + S-adenosyl-L-methionine = N(2)-methylguanosine(2445) in 23S rRNA + S-adenosyl-L-homocysteine + H(+). The catalysed reaction is guanosine(2069) in 23S rRNA + S-adenosyl-L-methionine = N(2)-methylguanosine(2069) in 23S rRNA + S-adenosyl-L-homocysteine + H(+). Its function is as follows. Specifically methylates the guanine in position 2445 (m2G2445) and the guanine in position 2069 (m7G2069) of 23S rRNA. This Pseudomonas putida (strain W619) protein is Ribosomal RNA large subunit methyltransferase K/L.